The chain runs to 464 residues: Glutamate--tRNA ligase (464 aa).

Residues 10-20 (PSPTGHLHLGG) carry the 'HIGH' region motif. Residues cysteine 99, cysteine 101, cysteine 126, and glutamate 128 each coordinate Zn(2+). The short motif at 236-240 (KLSKR) is the 'KMSKS' region element. Lysine 239 contributes to the ATP binding site.

This sequence belongs to the class-I aminoacyl-tRNA synthetase family. Glutamate--tRNA ligase type 1 subfamily. Monomer. Requires Zn(2+) as cofactor.

It localises to the cytoplasm. The catalysed reaction is tRNA(Glu) + L-glutamate + ATP = L-glutamyl-tRNA(Glu) + AMP + diphosphate. In terms of biological role, catalyzes the attachment of glutamate to tRNA(Glu) in a two-step reaction: glutamate is first activated by ATP to form Glu-AMP and then transferred to the acceptor end of tRNA(Glu). The polypeptide is Glutamate--tRNA ligase (Oleidesulfovibrio alaskensis (strain ATCC BAA-1058 / DSM 17464 / G20) (Desulfovibrio alaskensis)).